Reading from the N-terminus, the 545-residue chain is MKCSTFCFWYVCKIIFFFLSFNIQISIANPQENFLKCFSQYIPTNVTNAKLVYTQHDQFYMSILNSTIQNLRFTSDTTPKPLVIITPLNVSHIQGTILCSKKVGLQIRTRSGGHDAEGMSYISQVPFVIVDLRNMHSVKIDVHSQTAWVEAGATLGEVYYWINENNENLSFPAGYCPTVGAGGHFSGGGYGALMRNYGLAADNIIDAHLVNVDGKVLDRKSMGEDLFWAIRGGGGENFGIIAAWKIRLVAVPSMSTIFSVKKNMEIHELVKLVNKWQNIAYMYEKELLLFTHFITRNITDNQGKNKTTIHSYFSSIFHGGVDSLVDLMNKSFPELGIKKTDCKQLSWIDTIIFYSGVVNYNTTYFKKEILLDRSGGRKAAFSIKLDYVKKPIPETAMVTILEKLYEEDVGVGMFVFYPYGGIMDEISESAIPFPHRAGIMYEIWYIASWEKQEDNEKHINWIRNVYNFTTPYVSQNPRMAYLNYRDLDLGKTNFESPNNYTQARIWGEKYFGKNFNRLVKVKTKVDPDNFFRNEQSIPPLPLRHH.

A signal peptide spans 1–28 (MKCSTFCFWYVCKIIFFFLSFNIQISIA). The cysteines at positions 37 and 99 are disulfide-linked. Asparagine 45, asparagine 65, asparagine 89, and asparagine 168 each carry an N-linked (GlcNAc...) asparagine glycan. In terms of domain architecture, FAD-binding PCMH-type spans 77–251 (TTPKPLVIIT…AAWKIRLVAV (175 aa)). The segment at residues 114-176 (HDAEGMSYIS…ENLSFPAGYC (63 aa)) is a cross-link (6-(S-cysteinyl)-8alpha-(pros-histidyl)-FAD (His-Cys)). Histidine 292 is a substrate binding site. N-linked (GlcNAc...) asparagine glycans are attached at residues asparagine 297, asparagine 305, asparagine 329, and asparagine 361. Tyrosine 417 is a substrate binding site. N-linked (GlcNAc...) asparagine glycosylation is present at asparagine 467. Catalysis depends on tyrosine 484, which acts as the Proton acceptor. Asparagine 499 is a glycosylation site (N-linked (GlcNAc...) asparagine).

Belongs to the oxygen-dependent FAD-linked oxidoreductase family. Requires FAD as cofactor. Post-translationally, the FAD cofactor is bound via a bicovalent 6-S-cysteinyl, 8alpha-N1-histidyl FAD linkage.

Its subcellular location is the secreted. Functionally, has no cannabidiolic acid synthase activity. The sequence is that of Cannabidiolic acid synthase-like 1 (CBDAS2) from Cannabis sativa (Hemp).